The following is a 131-amino-acid chain: Small ribosomal subunit protein uS8 (131 aa).

This sequence belongs to the universal ribosomal protein uS8 family. As to quaternary structure, part of the 30S ribosomal subunit. Contacts proteins S5 and S12.

Functionally, one of the primary rRNA binding proteins, it binds directly to 16S rRNA central domain where it helps coordinate assembly of the platform of the 30S subunit. The protein is Small ribosomal subunit protein uS8 of Burkholderia lata (strain ATCC 17760 / DSM 23089 / LMG 22485 / NCIMB 9086 / R18194 / 383).